Reading from the N-terminus, the 127-residue chain is Major sperm protein 2 (127 aa).

An N-acetylalanine modification is found at alanine 2. In terms of domain architecture, MSP spans 9–126 (DIHTQPGSKI…RRKNLPIEYN (118 aa)).

Sperm.

The protein resides in the cell projection. The protein localises to the pseudopodium. It localises to the cytoplasm. Its subcellular location is the cytoskeleton. Central component in molecular interactions underlying sperm crawling. Forms an extensive filament system that extends from sperm villipoda, along the leading edge of the pseudopod. In Onchocerca volvulus, this protein is Major sperm protein 2.